The sequence spans 112 residues: uncharacterized protein (112 aa).

Coiled coils occupy residues alanine 15–phenylalanine 53 and leucine 86–lysine 103.

This is an uncharacterized protein from Aquifex aeolicus (strain VF5).